We begin with the raw amino-acid sequence, 233 residues long: Large ribosomal subunit protein uL1 (233 aa).

The protein belongs to the universal ribosomal protein uL1 family. As to quaternary structure, part of the 50S ribosomal subunit.

Binds directly to 23S rRNA. The L1 stalk is quite mobile in the ribosome, and is involved in E site tRNA release. Functionally, protein L1 is also a translational repressor protein, it controls the translation of the L11 operon by binding to its mRNA. This chain is Large ribosomal subunit protein uL1, found in Campylobacter concisus (strain 13826).